Here is a 126-residue protein sequence, read N- to C-terminus: Anti-adapter protein IraD (126 aa).

It belongs to the GpW/Gp25 family. IraD subfamily. Interacts with RssB.

The protein resides in the cytoplasm. Its function is as follows. Inhibits RpoS proteolysis by regulating RssB activity, thereby increasing the stability of the sigma stress factor RpoS during oxidative stress. Its effect on RpoS stability is due to its interaction with RssB, which probably blocks the interaction of RssB with RpoS, and the consequent delivery of the RssB-RpoS complex to the ClpXP protein degradation pathway. This Salmonella choleraesuis (strain SC-B67) protein is Anti-adapter protein IraD.